Consider the following 508-residue polypeptide: Photosystem II CP47 reaction center protein (508 aa).

Helical transmembrane passes span 21–36, 101–115, 140–156, 203–218, 237–252, and 457–472; these read SVHI…WAGS, IVFS…IWHW, GIHL…FGAF, IAAG…FHLS, VLSS…AFVV, and SFAL…HGAR.

It belongs to the PsbB/PsbC family. PsbB subfamily. As to quaternary structure, PSII is composed of 1 copy each of membrane proteins PsbA, PsbB, PsbC, PsbD, PsbE, PsbF, PsbH, PsbI, PsbJ, PsbK, PsbL, PsbM, PsbT, PsbX, PsbY, PsbZ, Psb30/Ycf12, at least 3 peripheral proteins of the oxygen-evolving complex and a large number of cofactors. It forms dimeric complexes. Binds multiple chlorophylls. PSII binds additional chlorophylls, carotenoids and specific lipids. is required as a cofactor.

It is found in the plastid. It localises to the chloroplast thylakoid membrane. Functionally, one of the components of the core complex of photosystem II (PSII). It binds chlorophyll and helps catalyze the primary light-induced photochemical processes of PSII. PSII is a light-driven water:plastoquinone oxidoreductase, using light energy to abstract electrons from H(2)O, generating O(2) and a proton gradient subsequently used for ATP formation. This is Photosystem II CP47 reaction center protein from Carica papaya (Papaya).